Here is a 335-residue protein sequence, read N- to C-terminus: Glycerol-3-phosphate dehydrogenase [NAD(P)+] (335 aa).

NADPH is bound by residues Trp15, Arg36, and Lys109. Lys109, Gly137, and Ser139 together coordinate sn-glycerol 3-phosphate. Ala141 is an NADPH binding site. Sn-glycerol 3-phosphate is bound by residues Lys192, Asp245, Ser255, Arg256, and Asn257. Lys192 acts as the Proton acceptor in catalysis. Residue Arg256 participates in NADPH binding. 2 residues coordinate NADPH: Leu279 and Glu281.

Belongs to the NAD-dependent glycerol-3-phosphate dehydrogenase family.

It localises to the cytoplasm. It catalyses the reaction sn-glycerol 3-phosphate + NAD(+) = dihydroxyacetone phosphate + NADH + H(+). The enzyme catalyses sn-glycerol 3-phosphate + NADP(+) = dihydroxyacetone phosphate + NADPH + H(+). The protein operates within membrane lipid metabolism; glycerophospholipid metabolism. Functionally, catalyzes the reduction of the glycolytic intermediate dihydroxyacetone phosphate (DHAP) to sn-glycerol 3-phosphate (G3P), the key precursor for phospholipid synthesis. The polypeptide is Glycerol-3-phosphate dehydrogenase [NAD(P)+] (Beijerinckia indica subsp. indica (strain ATCC 9039 / DSM 1715 / NCIMB 8712)).